Reading from the N-terminus, the 128-residue chain is Histone H2A.2 (128 aa).

Belongs to the histone H2A family. The nucleosome is a histone octamer containing two molecules each of H2A, H2B, H3 and H4 assembled in one H3-H4 heterotetramer and two H2A-H2B heterodimers. The octamer wraps approximately 147 bp of DNA. In terms of tissue distribution, expressed in the generative cell within the bicellular pollen. Not detected in other reproductive or vegetative tissues.

Its subcellular location is the nucleus. It localises to the chromosome. Core component of nucleosome. Nucleosomes wrap and compact DNA into chromatin, limiting DNA accessibility to the cellular machineries which require DNA as a template. Histones thereby play a central role in transcription regulation, DNA repair, DNA replication and chromosomal stability. DNA accessibility is regulated via a complex set of post-translational modifications of histones, also called histone code, and nucleosome remodeling. May be involved in the repression of gene expression in male gametes. The protein is Histone H2A.2 (gH2A) of Lilium longiflorum (Trumpet lily).